Here is a 211-residue protein sequence, read N- to C-terminus: uncharacterized protein (211 aa).

The stretch at isoleucine 105 to arginine 143 forms a coiled coil. The chain crosses the membrane as a helical span at residues glutamine 191–phenylalanine 211.

It belongs to the CCDC90 family.

It is found in the mitochondrion. It localises to the membrane. This is an uncharacterized protein from Schizosaccharomyces pombe (strain 972 / ATCC 24843) (Fission yeast).